A 483-amino-acid chain; its full sequence is Glutamyl-tRNA(Gln) amidotransferase subunit A (483 aa).

Residues Lys-75 and Ser-150 each act as charge relay system in the active site. Ser-174 serves as the catalytic Acyl-ester intermediate.

It belongs to the amidase family. GatA subfamily. As to quaternary structure, heterotrimer of A, B and C subunits.

It carries out the reaction L-glutamyl-tRNA(Gln) + L-glutamine + ATP + H2O = L-glutaminyl-tRNA(Gln) + L-glutamate + ADP + phosphate + H(+). Its function is as follows. Allows the formation of correctly charged Gln-tRNA(Gln) through the transamidation of misacylated Glu-tRNA(Gln) in organisms which lack glutaminyl-tRNA synthetase. The reaction takes place in the presence of glutamine and ATP through an activated gamma-phospho-Glu-tRNA(Gln). This is Glutamyl-tRNA(Gln) amidotransferase subunit A from Legionella pneumophila (strain Paris).